A 169-amino-acid polypeptide reads, in one-letter code: Transcription antitermination protein NusB (169 aa).

A compositionally biased stretch (basic and acidic residues) spans 1–19 (MAEMKKTIDNKPAPKGEKK). The tract at residues 1 to 22 (MAEMKKTIDNKPAPKGEKKANR) is disordered.

The protein belongs to the NusB family.

In terms of biological role, involved in transcription antitermination. Required for transcription of ribosomal RNA (rRNA) genes. Binds specifically to the boxA antiterminator sequence of the ribosomal RNA (rrn) operons. This chain is Transcription antitermination protein NusB, found in Rhodopseudomonas palustris (strain BisB18).